We begin with the raw amino-acid sequence, 108 residues long: ATP synthase subunit H, mitochondrial (108 aa).

A mitochondrion-targeting transit peptide spans 1–19; sequence MFTLRAASRRAFSTSIARR. Disordered regions lie at residues 40–60 and 75–108; these read AKDAEGQVKPWSAPSAPKPPV and APVDVEGQTNSKSASPQANDEDWLAFEEEEGVAV. A compositionally biased stretch (low complexity) spans 47-60; it reads VKPWSAPSAPKPPV. Polar residues predominate over residues 81–92; the sequence is GQTNSKSASPQA. A compositionally biased stretch (acidic residues) spans 93–108; it reads NDEDWLAFEEEEGVAV.

As to quaternary structure, F-type ATP synthases have 2 components, the catalytic core F(1) and the membrane-embedded component F(0), linked together by a central stalk and a peripheral stalk. The central stalk, also called rotor shaft, is often seen as part of F(1). The peripheral stalk is seen as part of F(0). F(0) contains the membrane channel next to the rotor. F-type ATP synthases form dimers but each monomer functions independently in ATP generation. The dimer consists of 17 different polypeptides: ATP1 (subunit alpha, 3 molecules per monomer, part of F(1)), ATP2 (subunit beta, 3 copies per monomer, part of F(1)), ATP3 (subunit gamma, part of the central stalk), ATP4 (subunit b, part of the peripheral stalk), ATP5/OSCP (subunit 5/OSCP, part of the peripheral stalk), ATP6 (subunit a, part of the peripheral stalk), ATP7 (subunit d, part of the peripheral stalk), ATP8 (subunit 8, part of the peripheral stalk), OLI1 (subunit c, part of the rotor, 10 molecules per monomer), ATP14 (subunit H, part of the peripheral stalk), ATP15 (subunit epsilon, part of the central stalk), ATP16 (subunit delta, part of the central stalk), ATP17 (subunit f, part of the peripheral stalk), ATP18 (subunit i/j, part of the peripheral stalk), ATP19 (subunit k, dimer-specific, at interface between monomers), ATP20 (subunit g, at interface between monomers), TIM11 (subunit e, at interface between monomers).

It is found in the mitochondrion inner membrane. Mitochondrial membrane ATP synthase (F(1)F(0) ATP synthase or Complex V) produces ATP from ADP in the presence of a proton gradient across the membrane which is generated by electron transport complexes of the respiratory chain. F-type ATP synthases consist of two structural domains, F(1) - containing the extramembraneous catalytic core, and F(0) - containing the membrane proton channel, linked together by a central stalk and a peripheral stalk. During catalysis, ATP synthesis in the catalytic domain of F(1) is coupled via a rotary mechanism of the central stalk subunits to proton translocation. Part of the peripheral stalk. The chain is ATP synthase subunit H, mitochondrial from Yarrowia lipolytica (strain CLIB 122 / E 150) (Yeast).